Reading from the N-terminus, the 114-residue chain is Protein U68 (114 aa).

Belongs to the herpesviridae UL96 family.

This chain is Protein U68 (U68), found in Homo sapiens (Human).